We begin with the raw amino-acid sequence, 368 residues long: Seven-bladed beta-propeller protein MSMEG_5308 (368 aa).

As to quaternary structure, interacts with MmpL3 and TtfA.

The protein resides in the cell septum. Its subcellular location is the cell tip. In terms of biological role, stabilizes the MmpL3/TtfA trehalose monomycolate (TMM) transport complex under stress conditions. The polypeptide is Seven-bladed beta-propeller protein MSMEG_5308 (Mycolicibacterium smegmatis (strain ATCC 700084 / mc(2)155) (Mycobacterium smegmatis)).